A 777-amino-acid chain; its full sequence is ATPase ARSA1 (777 aa).

110–117 (KGGVGKTS) contacts ATP. The active site involves Asp139. Residues Asn372 and 454-461 (KGGVGKTS) each bind ATP. Asp483 is a catalytic residue. Asn712 contributes to the ATP binding site.

Belongs to the arsA ATPase family. As to quaternary structure, monomer. Interacts with TOC34.

Its subcellular location is the cytoplasm. It is found in the cytosol. ATPase required for the post-translational delivery of tail-anchored (TA) proteins to the chloroplast. Required for the accumulation of TOC34, an essential component of the outer chloroplast membrane translocon (TOC) complex. Recognizes and selectively binds the transmembrane domain of TA proteins in the cytosol. This complex then targets to chloroplast, where the tail-anchored protein is released for insertion. This process is regulated by ATP binding and hydrolysis. This chain is ATPase ARSA1, found in Chlamydomonas reinhardtii (Chlamydomonas smithii).